Here is a 330-residue protein sequence, read N- to C-terminus: Serpentine receptor class J-38 (330 aa).

Helical transmembrane passes span 6 to 26 (IYIF…PIFV), 43 to 63 (LLLF…VVPI), 98 to 118 (LVAS…LVIY), 135 to 155 (LLLS…LGYA), 200 to 220 (TIIW…LALL), 253 to 273 (IPIV…IFGI), and 285 to 305 (GALG…LPIF).

Belongs to the nematode receptor-like protein srj family.

The protein resides in the membrane. The polypeptide is Serpentine receptor class J-38 (srj-38) (Caenorhabditis elegans).